A 559-amino-acid polypeptide reads, in one-letter code: Probable inorganic carbon transporter subunit DabB1 (559 aa).

13 helical membrane-spanning segments follow: residues 4–24, 33–53, 76–96, 106–126, 173–193, 202–222, 240–260, 273–293, 310–330, 375–395, 408–428, 440–460, and 487–507; these read LQWL…LFAA, LSVA…VAYI, LSSI…VYSI, PRFF…VAAG, LVLA…PTLF, ATIM…LSAF, GPTP…GFII, VLHM…VLML, MGFM…FHLI, LPWL…LVIA, GAIV…FATH, MMIL…GHAF, and GLVF…YLAS.

This sequence belongs to the inorganic carbon transporter (TC 9.A.2) DabB family. Forms a complex with DabA1.

The protein resides in the cell inner membrane. In terms of biological role, part of an energy-coupled inorganic carbon pump. This chain is Probable inorganic carbon transporter subunit DabB1, found in Halothiobacillus neapolitanus (strain ATCC 23641 / c2) (Thiobacillus neapolitanus).